Consider the following 239-residue polypeptide: ATP-dependent dethiobiotin synthetase BioD (239 aa).

15–20 (EIGKTF) is an ATP binding site. Residue T19 coordinates Mg(2+). K40 is an active-site residue. ATP contacts are provided by residues D57, 118-121 (EGVG), and 178-179 (NH). Mg(2+) contacts are provided by D57 and E118.

Belongs to the dethiobiotin synthetase family. As to quaternary structure, homodimer. Mg(2+) is required as a cofactor.

The protein localises to the cytoplasm. It catalyses the reaction (7R,8S)-7,8-diammoniononanoate + CO2 + ATP = (4R,5S)-dethiobiotin + ADP + phosphate + 3 H(+). It participates in cofactor biosynthesis; biotin biosynthesis; biotin from 7,8-diaminononanoate: step 1/2. Catalyzes a mechanistically unusual reaction, the ATP-dependent insertion of CO2 between the N7 and N8 nitrogen atoms of 7,8-diaminopelargonic acid (DAPA, also called 7,8-diammoniononanoate) to form a ureido ring. This is ATP-dependent dethiobiotin synthetase BioD from Burkholderia orbicola (strain MC0-3).